A 598-amino-acid chain; its full sequence is MFDKYRKTLVAGTVAITLGLSASGVMAAGFKPAPPAGQLGAVIVDPYGNAPLTALVDLDSHVISDVKVTVHGKGEKGVEISYPVGQESLKTYDGVPIFGLYQKFANKVTVEWKENGKVMKDDYVVHTSAIVNNYMDNRSISDLQQTKVIKVAPGFEDRLYLVNTHTFTAQGXDLHWHGEKDKNAGILDAGPATGALPFDIAPFTFIVDTEGEYRWWLDQDTFYDGRDRDINKRGYLMGIRETPRGTFTAVQGQHWYEFDMMGQVLEDHKLPRGFADATHESIETPNGTVLLRVGKSNYRRDDGVHVTTIRDHILEVDKSGRVVDVWDLTKILDPKRDALLGALDAGAVCVNVDLAHAGQQAKLEPDTPFGDALGVGPGRNWAHVNSIAYDAKDDSIILSSRHQGVVKIGRDKQVKWILAPSKGWEKPLASKLLKPVDANGKPITCNENGLCENSDFDFTYTQHTAWISSKGTLTIFDNGDGRHLEQPALPTMKYSRFVEYKIDEKKGTVQQVWEYGKERGYDFYSPITSIIEYQADRNTMFGFGGSIHLFDVGQPTVGKLNEIDYKTKEVKVEIDVLSDKPNQTHYRALLVRPQQMFK.

The signal sequence occupies residues 1-27; that stretch reads MFDKYRKTLVAGTVAITLGLSASGVMA. Histidine 279 and histidine 383 together coordinate 4-methylumbelliferone. A disulfide bridge connects residues cysteine 445 and cysteine 451. 4-methylumbelliferone is bound at residue histidine 463. Histidine 463 functions as the Nucleophile; sulfurylated histidine covalent intermediate in the catalytic mechanism.

Belongs to the aryl sulfotransferase family. As to quaternary structure, homodimer. Post-translationally, the disulfide bond is crucial for enzyme activity.

The protein localises to the periplasm. The catalysed reaction is an aryl sulfate + a phenol = an aryl sulfate + a phenol. The enzyme catalyses 4-methylumbelliferone sulfate + phenol = phenyl sulfate + 4-methylumbelliferone. Functionally, catalyzes the transfer of a sulfate group from a phenyl sulfate ester to other phenolic compounds. In vitro, is able to use 4-methylumbelliferyl sulfate and p-nitrophenyl sulfate (PNS) as donor substrates with phenol as the acceptor substrate. Cannot use 3'-phosphoadenosine-5'-phophosulfate (PAPS), the donor substrate of mammalian sulfotransferase. This Escherichia coli O6:H1 (strain CFT073 / ATCC 700928 / UPEC) protein is Arylsulfate sulfotransferase AssT.